Here is a 463-residue protein sequence, read N- to C-terminus: Bifunctional protein HldE (463 aa).

A ribokinase region spans residues 1–311 (MKKILVVGDL…EEIALILNQT (311 aa)). 191-194 (NRFE) lines the ATP pocket. Residue aspartate 260 is part of the active site. The segment at 334–463 (FTNGCFDLLH…IEKIKRTCND (130 aa)) is cytidylyltransferase.

In the N-terminal section; belongs to the carbohydrate kinase PfkB family. The protein in the C-terminal section; belongs to the cytidylyltransferase family. As to quaternary structure, homodimer.

It catalyses the reaction D-glycero-beta-D-manno-heptose 7-phosphate + ATP = D-glycero-beta-D-manno-heptose 1,7-bisphosphate + ADP + H(+). The enzyme catalyses D-glycero-beta-D-manno-heptose 1-phosphate + ATP + H(+) = ADP-D-glycero-beta-D-manno-heptose + diphosphate. Its pathway is nucleotide-sugar biosynthesis; ADP-L-glycero-beta-D-manno-heptose biosynthesis; ADP-L-glycero-beta-D-manno-heptose from D-glycero-beta-D-manno-heptose 7-phosphate: step 1/4. The protein operates within nucleotide-sugar biosynthesis; ADP-L-glycero-beta-D-manno-heptose biosynthesis; ADP-L-glycero-beta-D-manno-heptose from D-glycero-beta-D-manno-heptose 7-phosphate: step 3/4. Its function is as follows. Catalyzes the phosphorylation of D-glycero-D-manno-heptose 7-phosphate at the C-1 position to selectively form D-glycero-beta-D-manno-heptose-1,7-bisphosphate. In terms of biological role, catalyzes the ADP transfer from ATP to D-glycero-beta-D-manno-heptose 1-phosphate, yielding ADP-D-glycero-beta-D-manno-heptose. This Helicobacter pylori (strain G27) protein is Bifunctional protein HldE.